Consider the following 396-residue polypeptide: NADH-quinone oxidoreductase subunit D (396 aa).

The protein belongs to the complex I 49 kDa subunit family. In terms of assembly, NDH-1 is composed of 14 different subunits. Subunits NuoB, C, D, E, F, and G constitute the peripheral sector of the complex.

It is found in the cell inner membrane. It carries out the reaction a quinone + NADH + 5 H(+)(in) = a quinol + NAD(+) + 4 H(+)(out). NDH-1 shuttles electrons from NADH, via FMN and iron-sulfur (Fe-S) centers, to quinones in the respiratory chain. The immediate electron acceptor for the enzyme in this species is believed to be ubiquinone. Couples the redox reaction to proton translocation (for every two electrons transferred, four hydrogen ions are translocated across the cytoplasmic membrane), and thus conserves the redox energy in a proton gradient. The protein is NADH-quinone oxidoreductase subunit D of Rhodopseudomonas palustris (strain BisB18).